The chain runs to 327 residues: Methionyl-tRNA formyltransferase (327 aa).

121–124 (SLLP) provides a ligand contact to (6S)-5,6,7,8-tetrahydrofolate.

Belongs to the Fmt family.

The enzyme catalyses L-methionyl-tRNA(fMet) + (6R)-10-formyltetrahydrofolate = N-formyl-L-methionyl-tRNA(fMet) + (6S)-5,6,7,8-tetrahydrofolate + H(+). Attaches a formyl group to the free amino group of methionyl-tRNA(fMet). The formyl group appears to play a dual role in the initiator identity of N-formylmethionyl-tRNA by promoting its recognition by IF2 and preventing the misappropriation of this tRNA by the elongation apparatus. This is Methionyl-tRNA formyltransferase from Burkholderia pseudomallei (strain K96243).